The following is a 461-amino-acid chain: UDP-glycosyltransferase 82A1 (461 aa).

UDP-alpha-D-glucose is bound by residues Ser292, 349–351 (APQ), 366–374 (HCGWNSTME), and 388–391 (AGDQ).

It belongs to the UDP-glycosyltransferase family.

This chain is UDP-glycosyltransferase 82A1 (UGT82A1), found in Arabidopsis thaliana (Mouse-ear cress).